The chain runs to 337 residues: Ribosomal RNA small subunit methyltransferase H (337 aa).

S-adenosyl-L-methionine-binding positions include 33 to 35 (AGH), aspartate 53, aspartate 101, and glutamine 108.

Belongs to the methyltransferase superfamily. RsmH family.

It localises to the cytoplasm. It carries out the reaction cytidine(1402) in 16S rRNA + S-adenosyl-L-methionine = N(4)-methylcytidine(1402) in 16S rRNA + S-adenosyl-L-homocysteine + H(+). Functionally, specifically methylates the N4 position of cytidine in position 1402 (C1402) of 16S rRNA. This Herpetosiphon aurantiacus (strain ATCC 23779 / DSM 785 / 114-95) protein is Ribosomal RNA small subunit methyltransferase H.